Reading from the N-terminus, the 309-residue chain is Methionyl-tRNA formyltransferase (309 aa).

109–112 (SLLP) provides a ligand contact to (6S)-5,6,7,8-tetrahydrofolate.

Belongs to the Fmt family.

The catalysed reaction is L-methionyl-tRNA(fMet) + (6R)-10-formyltetrahydrofolate = N-formyl-L-methionyl-tRNA(fMet) + (6S)-5,6,7,8-tetrahydrofolate + H(+). Functionally, attaches a formyl group to the free amino group of methionyl-tRNA(fMet). The formyl group appears to play a dual role in the initiator identity of N-formylmethionyl-tRNA by promoting its recognition by IF2 and preventing the misappropriation of this tRNA by the elongation apparatus. In Thiobacillus denitrificans (strain ATCC 25259 / T1), this protein is Methionyl-tRNA formyltransferase.